The primary structure comprises 1362 residues: DNA-directed RNA polymerase subunit beta (1362 aa).

The protein belongs to the RNA polymerase beta chain family. In terms of assembly, the RNAP catalytic core consists of 2 alpha, 1 beta, 1 beta' and 1 omega subunit. When a sigma factor is associated with the core the holoenzyme is formed, which can initiate transcription.

The catalysed reaction is RNA(n) + a ribonucleoside 5'-triphosphate = RNA(n+1) + diphosphate. Functionally, DNA-dependent RNA polymerase catalyzes the transcription of DNA into RNA using the four ribonucleoside triphosphates as substrates. This Acinetobacter baumannii (strain AB307-0294) protein is DNA-directed RNA polymerase subunit beta.